We begin with the raw amino-acid sequence, 263 residues long: Endonuclease 8 (263 aa).

The active-site Schiff-base intermediate with DNA is Pro2. The active-site Proton donor is the Glu3. Catalysis depends on Lys53, which acts as the Proton donor; for beta-elimination activity. Residues Gln70, Arg125, and Asn169 each coordinate DNA. An FPG-type zinc finger spans residues 229–263; the sequence is KVFHRDGEACERCGGIIEKTTLSSRPFYWCPHCQK. The active-site Proton donor; for delta-elimination activity is the Arg253.

The protein belongs to the FPG family. Requires Zn(2+) as cofactor.

The enzyme catalyses 2'-deoxyribonucleotide-(2'-deoxyribose 5'-phosphate)-2'-deoxyribonucleotide-DNA = a 3'-end 2'-deoxyribonucleotide-(2,3-dehydro-2,3-deoxyribose 5'-phosphate)-DNA + a 5'-end 5'-phospho-2'-deoxyribonucleoside-DNA + H(+). Functionally, involved in base excision repair of DNA damaged by oxidation or by mutagenic agents. Acts as a DNA glycosylase that recognizes and removes damaged bases. Has a preference for oxidized pyrimidines, such as thymine glycol, 5,6-dihydrouracil and 5,6-dihydrothymine. Has AP (apurinic/apyrimidinic) lyase activity and introduces nicks in the DNA strand. Cleaves the DNA backbone by beta-delta elimination to generate a single-strand break at the site of the removed base with both 3'- and 5'-phosphates. This chain is Endonuclease 8, found in Salmonella arizonae (strain ATCC BAA-731 / CDC346-86 / RSK2980).